A 170-amino-acid polypeptide reads, in one-letter code: Lipoprotein signal peptidase (170 aa).

Helical transmembrane passes span 12–32 (WYWVVVLVFLADQLSKQWVLA), 67–87 (WQRWLFTIVAVGFSSLLTVWL), and 93–113 (SLLKLNLAYTLVIGGALGNLV). Active-site residues include Asp123 and Asp141. The chain crosses the membrane as a helical span at residues 137–157 (FNIADSAIFIGAVLIIWDSFF).

Belongs to the peptidase A8 family.

Its subcellular location is the cell inner membrane. It catalyses the reaction Release of signal peptides from bacterial membrane prolipoproteins. Hydrolyzes -Xaa-Yaa-Zaa-|-(S,diacylglyceryl)Cys-, in which Xaa is hydrophobic (preferably Leu), and Yaa (Ala or Ser) and Zaa (Gly or Ala) have small, neutral side chains.. It functions in the pathway protein modification; lipoprotein biosynthesis (signal peptide cleavage). This protein specifically catalyzes the removal of signal peptides from prolipoproteins. The polypeptide is Lipoprotein signal peptidase (Shewanella oneidensis (strain ATCC 700550 / JCM 31522 / CIP 106686 / LMG 19005 / NCIMB 14063 / MR-1)).